We begin with the raw amino-acid sequence, 501 residues long: Glycoprotein 3-alpha-L-fucosyltransferase A (501 aa).

Residues 1–39 are Cytoplasmic-facing; the sequence is MGVFSNLRGPKIGLTHEELPVVANGSTSSSSSPSSFKRK. The helical; Signal-anchor for type II membrane protein transmembrane segment at 40 to 60 threads the bilayer; sequence VSTFLPICVALVVIIEIGFLC. Topologically, residues 61–501 are lumenal; that stretch reads RLDNASLVDT…PCPKFEVVFV (441 aa). 4 N-linked (GlcNAc...) asparagine glycosylation sites follow: N64, N337, N420, and N481.

This sequence belongs to the glycosyltransferase 10 family. It depends on Mg(2+) as a cofactor. Requires Mn(2+) as cofactor. Glycosylation may be important for enzymatic activity.

Its subcellular location is the golgi apparatus. The protein resides in the golgi stack membrane. It carries out the reaction N(4)-{beta-D-GlcNAc-(1-&gt;2)-alpha-D-Man-(1-&gt;3)-[beta-D-GlcNAc-(1-&gt;2)-alpha-D-Man-(1-&gt;6)]-beta-D-Man-(1-&gt;4)-beta-D-GlcNAc-(1-&gt;4)-beta-D-GlcNAc}-L-asparaginyl-[protein] + GDP-beta-L-fucose = N(4)-{beta-D-GlcNAc-(1-&gt;2)-alpha-D-Man-(1-&gt;3)-[beta-D-GlcNAc-(1-&gt;2)-alpha-D-Man-(1-&gt;6)]-beta-D-Man-(1-&gt;4)-beta-D-GlcNAc-(1-&gt;4)-[alpha-L-Fuc(1-&gt;3)]-beta-D-GlcNAc}-L-asparaginyl-[protein] + GDP + H(+). The protein operates within protein modification; protein glycosylation. Inhibited by Cu(2+) and Zn(2+). Functionally, involved in cell wall synthesis. Preferentially catalyzes the addition of fucose in alpha 1-3 linkage to the first GlcNAc residue next to the peptide chains in N-glycans. The chain is Glycoprotein 3-alpha-L-fucosyltransferase A (FUT11) from Arabidopsis thaliana (Mouse-ear cress).